The following is a 217-amino-acid chain: Homologous-pairing protein 2 homolog (217 aa).

Positions 93–153 (IVALTAKVQS…LKNIKAATNH (61 aa)) form a coiled coil. Positions 118 to 182 (SSALTTPEMQ…WRKRKRMATE (65 aa)) are DNA-binding.

It belongs to the HOP2 family. In terms of assembly, interacts with the DNA-binding domain of the nuclear receptors NR3C1/GR, ESR2/ER-beta, THRB and RXRA. Forms a stable heterodimer with MND1. Interacts with PSMC3/TBP1. PTM: Phosphorylated by PKA, PKC and MAPK. In terms of tissue distribution, highly expressed in testis and colon.

It localises to the nucleus. Its function is as follows. Plays an important role in meiotic recombination. Stimulates DMC1-mediated strand exchange required for pairing homologous chromosomes during meiosis. The complex PSMC3IP/MND1 binds DNA, stimulates the recombinase activity of DMC1 as well as DMC1 D-loop formation from double-strand DNA. This complex stabilizes presynaptic RAD51 and DMC1 filaments formed on single strand DNA to capture double-strand DNA. This complex stimulates both synaptic and presynaptic critical steps in RAD51 and DMC1-promoted homologous pairing. May inhibit HIV-1 viral protein TAT activity and modulate the activity of proteasomes through association with PSMC3. Acts as a tissue specific coactivator of hormone-dependent transcription mediated by nuclear receptors. In Homo sapiens (Human), this protein is Homologous-pairing protein 2 homolog (PSMC3IP).